A 1489-amino-acid polypeptide reads, in one-letter code: ZEB2-regulated ABC transporter 1 (1489 aa).

The disordered stretch occupies residues 1 to 55; sequence MALPEANMSSTRSEQSSRSHDTIVGNEQPHSEKPAASAPGDQMSSDDEDEGPQTE. An N-linked (GlcNAc...) asparagine glycan is attached at N7. The segment covering 44-53 has biased composition (acidic residues); the sequence is SSDDEDEGPQ. Residues N70, N73, N118, N332, and N469 are each glycosylated (N-linked (GlcNAc...) asparagine). The ABC transporter 1 domain maps to 152-408; the sequence is LGLPDMVHQM…FINLGFECPD (257 aa). Transmembrane regions (helical) follow at residues 513–533, 552–572, 599–619, 628–648, and 662–682; these read LLGS…VAFI, GATL…EILT, ILVD…TLYF, GAFF…SGVF, and MVPA…VVPV. An N-linked (GlcNAc...) asparagine glycan is attached at N714. A helical transmembrane segment spans residues 773-793; that stretch reads GILIAMTIFNHVVYIVATEFI. Residues 811-834 are disordered; the sequence is PSKAKSDPEASSSRPIPTTEKNNN. Positions 819-834 are enriched in polar residues; the sequence is EASSSRPIPTTEKNNN. One can recognise an ABC transporter 2 domain in the interval 846–1088; the sequence is FHWNDVCYDI…TLTNYFVKHG (243 aa). 882 to 889 provides a ligand contact to ATP; it reads GVSGAGKT. 5 consecutive transmembrane segments (helical) span residues 1190–1210, 1218–1238, 1269–1289, 1307–1327, and 1333–1353; these read ALCI…PLSL, FAIF…MPHF, IPWN…PVGF, WLLI…AIAI, and AGGN…GVLA. N1402 carries N-linked (GlcNAc...) asparagine glycosylation. The chain crosses the membrane as a helical span at residues 1457 to 1477; sequence GIGMVYIVVNIVGALFLYWLI.

Belongs to the ABC transporter superfamily. ABCG family. PDR (TC 3.A.1.205) subfamily.

It is found in the cell membrane. The protein resides in the vacuole membrane. Functionally, ABC transporter involved in zearalenone production. The sequence is that of ZEB2-regulated ABC transporter 1 from Gibberella zeae (strain ATCC MYA-4620 / CBS 123657 / FGSC 9075 / NRRL 31084 / PH-1) (Wheat head blight fungus).